The primary structure comprises 286 residues: DegV domain-containing protein M6_Spy1658 (286 aa).

In terms of domain architecture, DegV spans 3-282 (FTIMTDSTAD…PNTLAVFVIG (280 aa)). Residues T62 and S94 each contribute to the hexadecanoate site.

Functionally, may bind long-chain fatty acids, such as palmitate, and may play a role in lipid transport or fatty acid metabolism. The sequence is that of DegV domain-containing protein M6_Spy1658 from Streptococcus pyogenes serotype M6 (strain ATCC BAA-946 / MGAS10394).